We begin with the raw amino-acid sequence, 92 residues long: Small ribosomal subunit protein bS18 (92 aa).

Belongs to the bacterial ribosomal protein bS18 family. In terms of assembly, part of the 30S ribosomal subunit. Forms a tight heterodimer with protein bS6.

Binds as a heterodimer with protein bS6 to the central domain of the 16S rRNA, where it helps stabilize the platform of the 30S subunit. The polypeptide is Small ribosomal subunit protein bS18 (Cupriavidus taiwanensis (strain DSM 17343 / BCRC 17206 / CCUG 44338 / CIP 107171 / LMG 19424 / R1) (Ralstonia taiwanensis (strain LMG 19424))).